A 227-amino-acid polypeptide reads, in one-letter code: ATP-dependent dethiobiotin synthetase BioD (227 aa).

Position 13-18 (13-18 (EVGKSV)) interacts with ATP. S17 serves as a coordination point for Mg(2+). Residue K38 is part of the active site. S42 provides a ligand contact to substrate. ATP is bound by residues D55, 116-119 (EGAG), and 176-177 (ND). Mg(2+) is bound by residues D55 and E116.

It belongs to the dethiobiotin synthetase family. As to quaternary structure, homodimer. The cofactor is Mg(2+).

Its subcellular location is the cytoplasm. The catalysed reaction is (7R,8S)-7,8-diammoniononanoate + CO2 + ATP = (4R,5S)-dethiobiotin + ADP + phosphate + 3 H(+). The protein operates within cofactor biosynthesis; biotin biosynthesis; biotin from 7,8-diaminononanoate: step 1/2. Functionally, catalyzes a mechanistically unusual reaction, the ATP-dependent insertion of CO2 between the N7 and N8 nitrogen atoms of 7,8-diaminopelargonic acid (DAPA, also called 7,8-diammoniononanoate) to form a ureido ring. The chain is ATP-dependent dethiobiotin synthetase BioD from Serratia marcescens.